We begin with the raw amino-acid sequence, 508 residues long: Carboxypeptidase Y homolog ARB_05721 (508 aa).

A signal peptide spans 1-25 (MELYLNMLSFWYILLATSFFGPSQA). N-linked (GlcNAc...) asparagine glycosylation is found at Asn132 and Asn169. Ser204 is an active-site residue. The N-linked (GlcNAc...) asparagine glycan is linked to Asn268. 3 cysteine pairs are disulfide-bonded: Cys282–Cys305, Cys289–Cys298, and Cys332–Cys338. Residue Asp410 is part of the active site. Cys413 lines the substrate pocket. Asn451 carries N-linked (GlcNAc...) asparagine glycosylation. His484 is an active-site residue. A substrate-binding site is contributed by Met485.

It belongs to the peptidase S10 family.

The protein localises to the secreted. It carries out the reaction Release of a C-terminal amino acid with broad specificity.. In terms of biological role, involved in degradation of small peptides. In Arthroderma benhamiae (strain ATCC MYA-4681 / CBS 112371) (Trichophyton mentagrophytes), this protein is Carboxypeptidase Y homolog ARB_05721.